The primary structure comprises 527 residues: T-complex protein 1 subunit delta (527 aa).

The protein belongs to the TCP-1 chaperonin family. Heterooligomeric complex of about 850 to 900 kDa that forms two stacked rings, 12 to 16 nm in diameter.

The protein resides in the cytoplasm. Molecular chaperone; assists the folding of proteins upon ATP hydrolysis. Known to play a role, in vitro, in the folding of actin and tubulin. This Schizosaccharomyces pombe (strain 972 / ATCC 24843) (Fission yeast) protein is T-complex protein 1 subunit delta (cct4).